The following is a 142-amino-acid chain: Small ribosomal subunit protein bS16 (142 aa).

Residues 101–142 are disordered; sequence RPSFDALGGDDAGKGEAITQKKKAEKKDEAAAESSSSESTEA. The span at 132-142 shows a compositional bias: low complexity; the sequence is AESSSSESTEA.

This sequence belongs to the bacterial ribosomal protein bS16 family.

In Streptomyces avermitilis (strain ATCC 31267 / DSM 46492 / JCM 5070 / NBRC 14893 / NCIMB 12804 / NRRL 8165 / MA-4680), this protein is Small ribosomal subunit protein bS16.